Reading from the N-terminus, the 220-residue chain is ATP phosphoribosyltransferase (220 aa).

The protein belongs to the ATP phosphoribosyltransferase family. Short subfamily. In terms of assembly, heteromultimer composed of HisG and HisZ subunits.

Its subcellular location is the cytoplasm. It catalyses the reaction 1-(5-phospho-beta-D-ribosyl)-ATP + diphosphate = 5-phospho-alpha-D-ribose 1-diphosphate + ATP. The protein operates within amino-acid biosynthesis; L-histidine biosynthesis; L-histidine from 5-phospho-alpha-D-ribose 1-diphosphate: step 1/9. Catalyzes the condensation of ATP and 5-phosphoribose 1-diphosphate to form N'-(5'-phosphoribosyl)-ATP (PR-ATP). Has a crucial role in the pathway because the rate of histidine biosynthesis seems to be controlled primarily by regulation of HisG enzymatic activity. This chain is ATP phosphoribosyltransferase, found in Anaeromyxobacter sp. (strain Fw109-5).